The primary structure comprises 588 residues: Sulfite reductase [NADPH] hemoprotein beta-component (588 aa).

Positions 1-10 (MSDKKQKGLE) are enriched in basic and acidic residues. The segment at 1–20 (MSDKKQKGLEWQDNPLSDNE) is disordered. 4 residues coordinate [4Fe-4S] cluster: Cys443, Cys449, Cys488, and Cys492. Cys492 is a binding site for siroheme.

This sequence belongs to the nitrite and sulfite reductase 4Fe-4S domain family. As to quaternary structure, alpha(8)-beta(8). The alpha component is a flavoprotein, the beta component is a hemoprotein. Siroheme is required as a cofactor. The cofactor is [4Fe-4S] cluster.

The enzyme catalyses hydrogen sulfide + 3 NADP(+) + 3 H2O = sulfite + 3 NADPH + 4 H(+). It functions in the pathway sulfur metabolism; hydrogen sulfide biosynthesis; hydrogen sulfide from sulfite (NADPH route): step 1/1. In terms of biological role, component of the sulfite reductase complex that catalyzes the 6-electron reduction of sulfite to sulfide. This is one of several activities required for the biosynthesis of L-cysteine from sulfate. This Mannheimia succiniciproducens (strain KCTC 0769BP / MBEL55E) protein is Sulfite reductase [NADPH] hemoprotein beta-component.